Consider the following 253-residue polypeptide: CD151 antigen (253 aa).

At 1-18 (MGEFNEKKATCGTVCLKY) the chain is on the cytoplasmic side. S-palmitoyl cysteine attachment occurs at residues C11 and C15. A helical transmembrane segment spans residues 19-39 (LLFTYNCCFWLAGLAVMAVGI). Over 40 to 57 (WTLALKSDYISLLASSTY) the chain is Extracellular. The helical transmembrane segment at 58 to 78 (LATAYILVVAGVVVMVTGVLG) threads the bilayer. Residues 79 to 91 (CCATFKERRNLLR) are Cytoplasmic-facing. The chain crosses the membrane as a helical span at residues 92–112 (LYFILLLIIFLLEIIAGILAY). Topologically, residues 113–221 (VYYQQLNTEL…LETFIQEHLR (109 aa)) are extracellular. N159 carries N-linked (GlcNAc...) asparagine glycosylation. The chain crosses the membrane as a helical span at residues 222 to 242 (VIGAVGIGIACVQVFGMIFTC). S-palmitoyl cysteine attachment occurs at residues C242 and C243. The Cytoplasmic portion of the chain corresponds to 243 to 253 (CLYRSLKLEHY).

Belongs to the tetraspanin (TM4SF) family. In terms of assembly, interacts with integrins ITGA3:ITGB1, ITGA5:ITGB1, ITGA3:ITGB1 and ITGA6:ITGB4 and with CD9 and CD181. Interacts (via the second extracellular domain) with integrin ITGAV:ITGB3. Interacts with ITGA3; this interaction modulates ITGA3 glycosylation pattern. Interacts with F11R. Interacts with RAC1 and CDC42; these interactions mediate physical association of RAC1 and CDC42 with integrin adhesion receptor complexes. Palmitoylated. Palmitoylation by ZDHHC2 regulates CD151 expression, association with other tetraspanin family proteins and function in cell adhesion. In terms of processing, ubiquitinated by RNF128 on lysine residues present in the tetraspanin amino terminus via 'Lys-48'-linked ubiquitin leading to proteasomal degradation.

The protein localises to the cell membrane. Its function is as follows. Structural component of specialized membrane microdomains known as tetraspanin-enriched microdomains (TERMs), which act as platforms for receptor clustering and signaling. Plays a role in various cellular and molecular mechanism through its association with both integrin and non-integrin proteins. These interactions facilitate critical cellular functions, including cell-to-cell communication, wound healing, platelet aggregation, trafficking, cell motility, and angiogenesis. Via interaction with JAM-A/F11R and integrin ITGA3:ITGB1, promotes the recruitment of signaling molecules such as RAC1, CDC42 and RhoGTPases to facilitate the polarization of epithelial cells and the reorganization of the actin cytoskeleton, which are critical steps in cell migration process. Regulates the glycosylation pattern of ITGA3:ITGB1 thereby modulating its activity. Plays an essential role in the maintenance of central laminin-binding integrin ITGA6:ITGB4-containing adhesion complexes. Essential for the proper assembly of the glomerular and tubular basement membranes in kidney. Contributes to T-cell activation by modulating integrin signaling leading to activation of downstream targets PTK2 and MAPK1/MAPK3. This is CD151 antigen (Cd151) from Mus musculus (Mouse).